The following is a 656-amino-acid chain: Choline transporter-like protein 3 (656 aa).

Residues 37–57 (WLVLFFLFWTGLVFIMGYSVV) form a helical membrane-spanning segment. N-linked (GlcNAc...) asparagine glycosylation is found at asparagine 141 and asparagine 154. The next 5 membrane-spanning stretches (helical) occupy residues 216–236 (DTIL…LFAF), 242–262 (LLIH…CGVL), 288–308 (LAFA…IFTL), 337–357 (LWTC…LLSL), and 381–401 (YMWW…LACQ). 2 N-linked (GlcNAc...) asparagine glycosylation sites follow: asparagine 506 and asparagine 524. The helical transmembrane segment at 537–557 (FVIFLGKVLVVCFSIFGGLMA) threads the bilayer. A glycan (N-linked (GlcNAc...) asparagine) is linked at asparagine 559. Residues 566 to 586 (VWAIPLLLVAFFACVVAHSFL) form a helical membrane-spanning segment. Residues 634–656 (AKSQGQKDALPNEEGTELQPIVR) form a disordered region.

It belongs to the CTL (choline transporter-like) family.

Its subcellular location is the membrane. In Mus musculus (Mouse), this protein is Choline transporter-like protein 3 (Slc44a3).